The primary structure comprises 133 residues: Profilin-3 (133 aa).

It belongs to the profilin family. As to quaternary structure, occurs in many kinds of cells as a complex with monomeric actin in a 1:1 ratio.

It is found in the cytoplasm. Its subcellular location is the cytoskeleton. Functionally, binds to actin and affects the structure of the cytoskeleton. At high concentrations, profilin prevents the polymerization of actin, whereas it enhances it at low concentrations. By binding to PIP2, it inhibits the formation of IP3 and DG. The polypeptide is Profilin-3 (Ambrosia artemisiifolia (Common ragweed)).